Reading from the N-terminus, the 235-residue chain is MGRAFEYRRAAKEARWDKMSKVFPKLAKAITVAAKDGGCDPDMNPKLRAAIAAAKAENMPKDNIDAAIKRANGKDSADIKTIFYDGKAAHGVQIIVECATDNPTRTVANVKAIFSKNGGEILPSGSLSFMFTRKSVFELEKPSANIEEIELELIDYGLSDIEEDENALFVYGDYANFGTLHEGIEKLNLVVKKASLQYLPNQTVSLDEEQMLEVERLLDKLEDDDDVQAVYTNIE.

Belongs to the TACO1 family.

It is found in the cytoplasm. This Campylobacter concisus (strain 13826) protein is Probable transcriptional regulatory protein Ccon26_04940.